The sequence spans 330 residues: Protein-lysine N-methyltransferase EEF2KMT (330 aa).

At M1 the chain carries N-acetylmethionine. S-adenosyl-L-methionine is bound by residues W139, 165–167 (GSG), W228, and A247.

This sequence belongs to the class I-like SAM-binding methyltransferase superfamily. EEF2KMT family. Interacts with FAM86B2 and FAM86C1P.

The protein localises to the cytoplasm. The enzyme catalyses L-lysyl-[protein] + 3 S-adenosyl-L-methionine = N(6),N(6),N(6)-trimethyl-L-lysyl-[protein] + 3 S-adenosyl-L-homocysteine + 3 H(+). Functionally, catalyzes the trimethylation of eukaryotic elongation factor 2 (EEF2) on 'Lys-525'. The protein is Protein-lysine N-methyltransferase EEF2KMT of Homo sapiens (Human).